A 466-amino-acid chain; its full sequence is Ribulose bisphosphate carboxylase large chain (466 aa).

Lys5 carries the post-translational modification N6,N6,N6-trimethyllysine. Positions 114 and 164 each coordinate substrate. The Proton acceptor role is filled by Lys166. Residue Lys168 coordinates substrate. Positions 192, 194, and 195 each coordinate Mg(2+). Lys192 is subject to N6-carboxylysine. Catalysis depends on His285, which acts as the Proton acceptor. The substrate site is built by Arg286, His318, and Ser370.

This sequence belongs to the RuBisCO large chain family. Type I subfamily. As to quaternary structure, heterohexadecamer of 8 large chains and 8 small chains; disulfide-linked. The disulfide link is formed within the large subunit homodimers. The cofactor is Mg(2+). In terms of processing, the disulfide bond which can form in the large chain dimeric partners within the hexadecamer appears to be associated with oxidative stress and protein turnover.

Its subcellular location is the plastid. It is found in the chloroplast. It carries out the reaction 2 (2R)-3-phosphoglycerate + 2 H(+) = D-ribulose 1,5-bisphosphate + CO2 + H2O. The catalysed reaction is D-ribulose 1,5-bisphosphate + O2 = 2-phosphoglycolate + (2R)-3-phosphoglycerate + 2 H(+). Its function is as follows. RuBisCO catalyzes two reactions: the carboxylation of D-ribulose 1,5-bisphosphate, the primary event in carbon dioxide fixation, as well as the oxidative fragmentation of the pentose substrate in the photorespiration process. Both reactions occur simultaneously and in competition at the same active site. The protein is Ribulose bisphosphate carboxylase large chain of Drosophyllum lusitanicum (Portuguese sundew).